A 488-amino-acid chain; its full sequence is Stress activated transcription factor atfs-1 (488 aa).

The N-terminal 23 residues, 1–23, are a transit peptide targeting the mitochondrion; the sequence is MFSRVGRLTTFGAQAVSNCPFRR. A disordered region spans residues 138–191; sequence SWQNGSSVGHPHGHQQQQQTCQQPPTHSSTTETMHDFSNFGDNMGSPLFQSPSK. Residues 142–168 are compositionally biased toward low complexity; it reads GSSVGHPHGHQQQQQTCQQPPTHSSTT. Lys342 participates in a covalent cross-link: Glycyl lysine isopeptide (Lys-Gly) (interchain with G-Cter in smo-1). Residues 353–400 form a disordered region; sequence QRDDDDEDYIPASEARRTSSRLNRKSATPTYLRRRDSERSWTPASDDY. Residues 420–483 form the bZIP domain; the sequence is DEETDRRRML…NSMKKELRKM (64 aa). Positions 425–460 are basic motif; it reads RRRMLNRIAAVRYREKKRAEKKGRKMEFQEVADRNR. Positions 436 to 441 match the Nuclear localization signal motif; sequence RYREKK. Residues 462–469 are leucine-zipper; the sequence is LLQKERQL.

Belongs to the bZIP family. May be desumoylated by ulp-4. Ubiquitously expressed.

It is found in the mitochondrion matrix. It localises to the cytoplasm. The protein localises to the nucleus. Functionally, acts as a transcription factor during mitochondrial stress by activating the mitochondrial unfolded protein response (mtUPR). Induces nuclear and mitochondrial gene transcription, including genes coding for mitochondrial chaperones and proteins involved in glycolysis, amino acid catabolism and innate immunity. Following mitochondrial stress, restores mitochondrial respiratory capacity by limiting the transcription of oxidative phosphorylation (OXPHOS) machinery genes and by promoting the assembly of OXPHOS complexes via the up-regulation of chaperone and assembly factor genes. Component of a feedback loop involving atfs-1, atgl-1 and hlh-11. Acts together with flp-7 to negatively regulate the expression of the transcription regulator hlh-11, to promote expression of atgl-1, and thus atgl-1-dependent fat oxidation in response to mitochondrial stress. In addition, functions with hlh-11 to maintain lifespan. Promotes mtDNA maintenance and propagation of deleterious mtDNA. The polypeptide is Stress activated transcription factor atfs-1 (Caenorhabditis elegans).